Consider the following 1123-residue polypeptide: Nicotinic receptor-associated protein 4 (1123 aa).

The N-terminal stretch at 1–18 is a signal peptide; the sequence is MGSLPLILLSLLLPGALA. At 19 to 1071 the chain is on the lumenal side; it reads NVYSCAGSVK…TSSKRANDVD (1053 aa). The chain crosses the membrane as a helical span at residues 1072-1092; that stretch reads ISVGTFLSLPFFVTLALVFFN. Residues 1093–1123 are Cytoplasmic-facing; the sequence is QNRVLELLGTFIDWARNTFAPTADNHHRKRK.

May interact with nra-2 in the ER. In terms of tissue distribution, expressed in body wall, pharyngeal, uterine and vulval muscles, motor neurons, nerve ring, motor and ventral cord neurons, hypodermal cells in the tail, vulval epithelium and intestine.

It localises to the endoplasmic reticulum membrane. Functionally, involved in the recognition and selection of protein complexes to exit the endoplasmic reticulum (ER). In muscles, regulates levamisole-sensitive nicotinic acetylcholine receptor (L-AChR) subunit composition, possibly by allowing only specific L-AChR subunit combinations to exit the ER. Specifically, may promote the inclusion of alpha subunit unc-38 into and the exclusion of unc-29 from L-AChR. Regulates L-AChR sensitivity to agonists such as nicotine and levamisole at neuro-muscular junctions. This chain is Nicotinic receptor-associated protein 4, found in Caenorhabditis elegans.